Reading from the N-terminus, the 120-residue chain is DNA-binding protein HQ_1105A (120 aa).

The segment at 1–55 is disordered; it reads MSETPDDLDELRQQRMEELRDQADGQQSQTSDNTAAAQEAAREKAEAQQEALLKQ. A compositionally biased stretch (basic and acidic residues) spans 10–23; the sequence is ELRQQRMEELRDQA. The segment covering 24 to 34 has biased composition (polar residues); the sequence is DGQQSQTSDNT.

The protein belongs to the PDCD5 family.

This chain is DNA-binding protein HQ_1105A, found in Haloquadratum walsbyi (strain DSM 16790 / HBSQ001).